The sequence spans 85 residues: Probable [Fe-S]-dependent transcriptional repressor (85 aa).

Iron-sulfur cluster-binding residues include cysteine 56, cysteine 61, cysteine 64, and cysteine 71.

This sequence belongs to the FeoC family.

Its function is as follows. May function as a transcriptional regulator that controls feoABC expression. This chain is Probable [Fe-S]-dependent transcriptional repressor, found in Yersinia pseudotuberculosis serotype O:1b (strain IP 31758).